The primary structure comprises 149 residues: Alpha-crystallin A chain (149 aa).

Residues 41–149 (LFRSVLESGI…DPSHSERPIP (109 aa)) form the sHSP domain. Residues histidine 89, glutamate 91, histidine 96, and histidine 143 each coordinate Zn(2+).

It belongs to the small heat shock protein (HSP20) family. Heteropolymer composed of three CRYAA and one CRYAB subunits. Inter-subunit bridging via zinc ions enhances stability, which is crucial as there is no protein turn over in the lens. Can also form homodimers and homotetramers (dimers of dimers) which serve as the building blocks of homooligomers. Within homooligomers, the zinc-binding motif is created from residues of 3 different molecules. His-89 and Glu-91 from one molecule are ligands of the zinc ion, and His-96 and His-143 residues from additional molecules complete the site with tetrahedral coordination geometry.

The protein resides in the cytoplasm. It localises to the nucleus. Its function is as follows. Contributes to the transparency and refractive index of the lens. May act as a chaperone, preventing aggregation of various proteins under a wide range of stress conditions. This is Alpha-crystallin A chain (CRYAA) from Eudromia elegans (Elegant crested-tinamou).